The following is a 233-amino-acid chain: Syntaxin-52 (233 aa).

The Cytoplasmic segment spans residues 1–209; that stretch reads MASSSDPWMR…NKSMKSGCSC (209 aa). One can recognise a t-SNARE coiled-coil homology domain in the interval 137 to 199; it reads RQVMREQDEG…RRVQKSLALM (63 aa). A helical; Anchor for type IV membrane protein membrane pass occupies residues 210–230; it reads MSMLLSVLGIVGLALVIWLLV. The Vesicular portion of the chain corresponds to 231 to 233; the sequence is KYL.

Belongs to the syntaxin family. As to quaternary structure, interacts either with VTI11 and SYP21, or with VTI11 and SYP22 in the prevacuolar compartment, or with VTI12 and SYP61 in the trans-Golgi network to form t-SNARE complexes. As to expression, expressed in root, leaf, stem, flower and silique.

The protein resides in the golgi apparatus. It is found in the trans-Golgi network membrane. It localises to the prevacuolar compartment membrane. Vesicle trafficking protein that functions in the secretory pathway. This chain is Syntaxin-52 (SYP52), found in Arabidopsis thaliana (Mouse-ear cress).